Reading from the N-terminus, the 476-residue chain is Cardiolipin synthase (476 aa).

The next 2 helical transmembrane spans lie at 2 to 22 (HLLI…IIFI) and 31 to 51 (WAWI…YILF). PLD phosphodiesterase domains lie at 207 to 234 (INYR…GDEY) and 389 to 416 (EKGF…DIRS). Catalysis depends on residues H212, K214, D219, H394, K396, and D401.

The protein belongs to the phospholipase D family. Cardiolipin synthase subfamily.

The protein localises to the cell membrane. It carries out the reaction 2 a 1,2-diacyl-sn-glycero-3-phospho-(1'-sn-glycerol) = a cardiolipin + glycerol. Functionally, catalyzes the reversible phosphatidyl group transfer from one phosphatidylglycerol molecule to another to form cardiolipin (CL) (diphosphatidylglycerol) and glycerol. The polypeptide is Cardiolipin synthase (cls) (Clostridium perfringens (strain SM101 / Type A)).